The sequence spans 377 residues: Phospho-N-acetylmuramoyl-pentapeptide-transferase (377 aa).

A run of 11 helical transmembrane segments spans residues 9-29 (YITL…LVAG), 59-79 (TPTM…LLWA), 85-105 (FVWV…MDDY), 122-142 (FFWQ…AVSA), 155-175 (WVGS…VPFF), 178-198 (VSYP…IVGT), 210-230 (GLAI…AYVV), 247-267 (AAEL…FLWF), 274-294 (VFMG…IAVI), 299-319 (IVLF…MVQV), and 354-374 (QVVV…LSTL).

The protein belongs to the glycosyltransferase 4 family. MraY subfamily. Mg(2+) is required as a cofactor.

It localises to the cell inner membrane. It catalyses the reaction UDP-N-acetyl-alpha-D-muramoyl-L-alanyl-gamma-D-glutamyl-meso-2,6-diaminopimeloyl-D-alanyl-D-alanine + di-trans,octa-cis-undecaprenyl phosphate = di-trans,octa-cis-undecaprenyl diphospho-N-acetyl-alpha-D-muramoyl-L-alanyl-D-glutamyl-meso-2,6-diaminopimeloyl-D-alanyl-D-alanine + UMP. Its pathway is cell wall biogenesis; peptidoglycan biosynthesis. In terms of biological role, catalyzes the initial step of the lipid cycle reactions in the biosynthesis of the cell wall peptidoglycan: transfers peptidoglycan precursor phospho-MurNAc-pentapeptide from UDP-MurNAc-pentapeptide onto the lipid carrier undecaprenyl phosphate, yielding undecaprenyl-pyrophosphoryl-MurNAc-pentapeptide, known as lipid I. The protein is Phospho-N-acetylmuramoyl-pentapeptide-transferase of Bordetella bronchiseptica (strain ATCC BAA-588 / NCTC 13252 / RB50) (Alcaligenes bronchisepticus).